The primary structure comprises 395 residues: Mevalonate kinase (395 aa).

Residues Lys13, Asn55, Asn104, Ser135, and Gly140–Ser146 each bind ATP. Ser146 acts as the Proton donor in catalysis. Residues Ser146 and Glu193 each contribute to the Mg(2+) site. The active-site Proton acceptor is the Asp204.

The protein belongs to the GHMP kinase family. Mevalonate kinase subfamily. Homodimer. Mg(2+) serves as cofactor.

It is found in the cytoplasm. The protein localises to the peroxisome. The enzyme catalyses (R)-mevalonate + ATP = (R)-5-phosphomevalonate + ADP + H(+). The protein operates within isoprenoid biosynthesis; isopentenyl diphosphate biosynthesis via mevalonate pathway; isopentenyl diphosphate from (R)-mevalonate: step 1/3. With respect to regulation, farnesyl pyrophosphate and geranyl pyrophosphate inhibit mevalonate kinase activity by binding competitively at the ATP-binding sites. Catalyzes the phosphorylation of mevalonate to mevalonate 5-phosphate, a key step in isoprenoid and cholesterol biosynthesis. The protein is Mevalonate kinase of Mus musculus (Mouse).